A 519-amino-acid polypeptide reads, in one-letter code: MSERIEIPAEKLHEEMLKLRQGKHMDFLRSLTGMDWGEEGLGVVYHLEDTNTRENIVVSTRTTNREKPELPSVSDIWKGAEFNEREVYDYYGIRFIGHPDMRRLFLRDDWVGYPLRKDYDESLNPLRMTNEEPVDTTQYIEVQHDGSVIEKRETIFDEDEYIINIGPQHPATHGVLRFRVSLEGEIIKKLDVHCGYIHRGIEKMCESLTYPQTLALTDRLDYLGAHQNRHALCMCIEQAMGVEVSERVQYIRTIMDELQRIDSHLLFFSCLCMDMGALTAFFYGFRDREKILDIFEATTGGRLIQNYNTIGGVQADIAPDFVQKVKEFIAYLRPMLKEYHEVFTGNVIAQERLKGVGVLSREDAISFGATGGTGRASGWACDVRKRHPYAMYGKVDFKEIVHTEGDCFARYMVRMEEILESMDIIEQLIDNIPEGNYQEKMKPIIRVPEGNYYAAVEGSRGEFGVYLESRGDKFPYRMKFRATGLPLVSAMETMCRNAKIADLIAIGGTVDYVVPDIDR.

An NADH dehydrogenase I subunit C region spans residues 1–138 (MSERIEIPAE…TNEEPVDTTQ (138 aa)). Residues 159–519 (DEYIINIGPQ…VDYVVPDIDR (361 aa)) are NADH dehydrogenase I subunit D.

In the N-terminal section; belongs to the complex I 30 kDa subunit family. The protein in the C-terminal section; belongs to the complex I 49 kDa subunit family. In terms of assembly, NDH-1 is composed of 13 different subunits. Subunits NuoB, CD, E, F, and G constitute the peripheral sector of the complex.

The protein localises to the cell inner membrane. The enzyme catalyses a quinone + NADH + 5 H(+)(in) = a quinol + NAD(+) + 4 H(+)(out). Its function is as follows. NDH-1 shuttles electrons from NADH, via FMN and iron-sulfur (Fe-S) centers, to quinones in the respiratory chain. The immediate electron acceptor for the enzyme in this species is believed to be a menaquinone. Couples the redox reaction to proton translocation (for every two electrons transferred, four hydrogen ions are translocated across the cytoplasmic membrane), and thus conserves the redox energy in a proton gradient. In Phocaeicola vulgatus (strain ATCC 8482 / DSM 1447 / JCM 5826 / CCUG 4940 / NBRC 14291 / NCTC 11154) (Bacteroides vulgatus), this protein is NADH-quinone oxidoreductase subunit C/D.